Reading from the N-terminus, the 818-residue chain is Structure-specific endonuclease subunit SLX4 (818 aa).

Disordered regions lie at residues 1–39, 53–151, 279–324, 413–437, and 587–712; these read MSFL…PSAS, RDPY…SSSN, FSEG…HQDS, NAQF…KTSK, and MLPA…MASE. The segment covering 28-39 has biased composition (low complexity); sequence VIDSSPSVPSAS. Residues 90–103 show a composition bias toward basic and acidic residues; that stretch reads PSERTKDAHGKDRF. Positions 306-316 are enriched in low complexity; the sequence is TTSTTITSLST. Residues 426–437 are compositionally biased toward polar residues; that stretch reads TRSPCSNPKTSK. The segment covering 604-618 has biased composition (basic and acidic residues); that stretch reads QMSKRDTIKSRDIRA. Composition is skewed to polar residues over residues 621–640, 652–672, and 696–712; these read SRSN…QNTG, SSKS…TQSV, and SLAS…MASE.

Belongs to the SLX4 family. As to quaternary structure, forms a heterodimer with SLX1. Phosphorylated in response to DNA damage.

Its subcellular location is the nucleus. Functionally, regulatory subunit of the SLX1-SLX4 structure-specific endonuclease that resolves DNA secondary structures generated during DNA repair and recombination. Has endonuclease activity towards branched DNA substrates, introducing single-strand cuts in duplex DNA close to junctions with ss-DNA. The protein is Structure-specific endonuclease subunit SLX4 of Uncinocarpus reesii (strain UAMH 1704).